Consider the following 951-residue polypeptide: AP-1 complex subunit beta-1 (951 aa).

K318 carries the N6-acetyllysine modification. Y574 bears the 3'-nitrotyrosine mark.

It belongs to the adaptor complexes large subunit family. As to quaternary structure, adaptor protein complex 1 (AP-1) is a heterotetramer composed of two large adaptins (gamma-type subunit AP1G1 and beta-type subunit AP1B1), a medium adaptin (mu-type subunit AP1M1 or AP1M2) and a small adaptin (sigma-type subunit AP1S1 or AP1S2 or AP1S3).

The protein localises to the cytoplasmic vesicle. It localises to the clathrin-coated vesicle membrane. Its subcellular location is the golgi apparatus. In terms of biological role, subunit of clathrin-associated adaptor protein complex 1 that plays a role in protein sorting in the late-Golgi/trans-Golgi network (TGN) and/or endosomes. The AP complexes mediate both the recruitment of clathrin to membranes and the recognition of sorting signals within the cytosolic tails of transmembrane cargo molecules. The sequence is that of AP-1 complex subunit beta-1 (AP2B1) from Bos taurus (Bovine).